The sequence spans 378 residues: Ribosomal RNA large subunit methyltransferase G (378 aa).

The protein belongs to the methyltransferase superfamily. RlmG family.

The protein localises to the cytoplasm. It carries out the reaction guanosine(1835) in 23S rRNA + S-adenosyl-L-methionine = N(2)-methylguanosine(1835) in 23S rRNA + S-adenosyl-L-homocysteine + H(+). In terms of biological role, specifically methylates the guanine in position 1835 (m2G1835) of 23S rRNA. In Salmonella paratyphi A (strain ATCC 9150 / SARB42), this protein is Ribosomal RNA large subunit methyltransferase G.